The chain runs to 392 residues: Imidazolonepropionase (392 aa).

Residues histidine 69 and histidine 71 each contribute to the Fe(3+) site. Zn(2+) is bound by residues histidine 69 and histidine 71. The 4-imidazolone-5-propanoate site is built by arginine 78, tyrosine 136, and histidine 163. Tyrosine 136 serves as a coordination point for N-formimidoyl-L-glutamate. Histidine 226 is a binding site for Fe(3+). Histidine 226 contributes to the Zn(2+) binding site. Residue glutamine 229 coordinates 4-imidazolone-5-propanoate. A Fe(3+)-binding site is contributed by aspartate 302. Aspartate 302 contacts Zn(2+). Asparagine 304 and glycine 306 together coordinate N-formimidoyl-L-glutamate. Position 307 (serine 307) interacts with 4-imidazolone-5-propanoate.

This sequence belongs to the metallo-dependent hydrolases superfamily. HutI family. It depends on Zn(2+) as a cofactor. The cofactor is Fe(3+).

Its subcellular location is the cytoplasm. The catalysed reaction is 4-imidazolone-5-propanoate + H2O = N-formimidoyl-L-glutamate. Its pathway is amino-acid degradation; L-histidine degradation into L-glutamate; N-formimidoyl-L-glutamate from L-histidine: step 3/3. In terms of biological role, catalyzes the hydrolytic cleavage of the carbon-nitrogen bond in imidazolone-5-propanoate to yield N-formimidoyl-L-glutamate. It is the third step in the universal histidine degradation pathway. In Salinispora tropica (strain ATCC BAA-916 / DSM 44818 / JCM 13857 / NBRC 105044 / CNB-440), this protein is Imidazolonepropionase.